Here is a 312-residue protein sequence, read N- to C-terminus: MATSKILLYYAFTPLSDPKAVQLWQRELCESLNLRGRILISTHGINGTVGGDIDDCKAYIKKTREYPGFNRMQFKWSEGGAEDFPKLSVKVRDEIVAFGAPDELKVDENGVVGGGVHLKPQQVNELVEARGDEVVFFDGRNAMEAQIGKFKDAVVPDVETTHDFIAEIESGKYDDLKDKPVVTYCTGGIRCEILSSLMINRGFKEVYQIDGGIVRYGEQFGNKGLWEGSLYVFDKRMHMEFGEDYKEVGHCIHCDTPTNKFEHCLNEDDCRELVLMCPDCFANVETRHCKRERCAAIAADFAEQGIDPLVTS.

The Rhodanese domain maps to Arg-130–Leu-225. Cys-185 serves as the catalytic Cysteine persulfide intermediate.

It belongs to the TrhO family.

The enzyme catalyses uridine(34) in tRNA + AH2 + O2 = 5-hydroxyuridine(34) in tRNA + A + H2O. Catalyzes oxygen-dependent 5-hydroxyuridine (ho5U) modification at position 34 in tRNAs. This Corynebacterium glutamicum (strain ATCC 13032 / DSM 20300 / JCM 1318 / BCRC 11384 / CCUG 27702 / LMG 3730 / NBRC 12168 / NCIMB 10025 / NRRL B-2784 / 534) protein is tRNA uridine(34) hydroxylase.